The following is a 74-amino-acid chain: uncharacterized protein (74 aa).

2 helical membrane-spanning segments follow: residues 3-23 (YSAL…CFSF) and 35-55 (ILFF…MLLT).

The protein localises to the cell membrane. This is an uncharacterized protein from Mycoplasma genitalium (strain ATCC 33530 / DSM 19775 / NCTC 10195 / G37) (Mycoplasmoides genitalium).